Consider the following 184-residue polypeptide: Elongation factor P (184 aa).

The protein belongs to the elongation factor P family.

The protein resides in the cytoplasm. It participates in protein biosynthesis; polypeptide chain elongation. Its function is as follows. Involved in peptide bond synthesis. Stimulates efficient translation and peptide-bond synthesis on native or reconstituted 70S ribosomes in vitro. Probably functions indirectly by altering the affinity of the ribosome for aminoacyl-tRNA, thus increasing their reactivity as acceptors for peptidyl transferase. The sequence is that of Elongation factor P from Mycoplasma mycoides subsp. mycoides SC (strain CCUG 32753 / NCTC 10114 / PG1).